A 113-amino-acid chain; its full sequence is UPF0122 protein MCAP_0480 (113 aa).

The protein belongs to the UPF0122 family.

In terms of biological role, might take part in the signal recognition particle (SRP) pathway. This is inferred from the conservation of its genetic proximity to ftsY/ffh. May be a regulatory protein. The chain is UPF0122 protein MCAP_0480 from Mycoplasma capricolum subsp. capricolum (strain California kid / ATCC 27343 / NCTC 10154).